Consider the following 93-residue polypeptide: uncharacterized protein (93 aa).

2 helical membrane-spanning segments follow: residues 7-27 and 70-90; these read LIFL…LGMI and ILSV…AFGI.

The protein resides in the cell membrane. This is an uncharacterized protein from Methanocaldococcus jannaschii (strain ATCC 43067 / DSM 2661 / JAL-1 / JCM 10045 / NBRC 100440) (Methanococcus jannaschii).